The following is a 414-amino-acid chain: Ribulose bisphosphate carboxylase large chain (414 aa).

Substrate contacts are provided by Asn-100 and Thr-150. Catalysis depends on Lys-152, which acts as the Proton acceptor. Lys-154 provides a ligand contact to substrate. 3 residues coordinate Mg(2+): Lys-178, Asp-180, and Glu-181. Lys-178 carries the N6-carboxylysine modification. The Proton acceptor role is filled by His-271. 3 residues coordinate substrate: Arg-272, His-304, and Ser-356.

This sequence belongs to the RuBisCO large chain family. Type I subfamily. In terms of assembly, heterohexadecamer of 8 large chains and 8 small chains; disulfide-linked. The disulfide link is formed within the large subunit homodimers. Mg(2+) is required as a cofactor. The disulfide bond which can form in the large chain dimeric partners within the hexadecamer appears to be associated with oxidative stress and protein turnover.

The protein resides in the plastid. It is found in the chloroplast. The catalysed reaction is 2 (2R)-3-phosphoglycerate + 2 H(+) = D-ribulose 1,5-bisphosphate + CO2 + H2O. The enzyme catalyses D-ribulose 1,5-bisphosphate + O2 = 2-phosphoglycolate + (2R)-3-phosphoglycerate + 2 H(+). Functionally, ruBisCO catalyzes two reactions: the carboxylation of D-ribulose 1,5-bisphosphate, the primary event in carbon dioxide fixation, as well as the oxidative fragmentation of the pentose substrate in the photorespiration process. Both reactions occur simultaneously and in competition at the same active site. The sequence is that of Ribulose bisphosphate carboxylase large chain (rbcL) from Blechnopsis orientalis (Fish fern).